We begin with the raw amino-acid sequence, 110 residues long: Iron-sulfur cluster assembly protein CyaY (110 aa).

Belongs to the frataxin family.

Its function is as follows. Involved in iron-sulfur (Fe-S) cluster assembly. May act as a regulator of Fe-S biogenesis. The polypeptide is Iron-sulfur cluster assembly protein CyaY (Azotobacter vinelandii (strain DJ / ATCC BAA-1303)).